A 244-amino-acid polypeptide reads, in one-letter code: tRNA (guanine-N(7)-)-methyltransferase (244 aa).

Positions 1 to 10 (MSDTPQSPAQ) are enriched in polar residues. The tract at residues 1-20 (MSDTPQSPAQDSLAEHDEAR) is disordered. Positions 74, 99, 126, and 149 each coordinate S-adenosyl-L-methionine. D149 is an active-site residue. Substrate contacts are provided by residues K153, D185, and 222-225 (TKFE).

Belongs to the class I-like SAM-binding methyltransferase superfamily. TrmB family.

The catalysed reaction is guanosine(46) in tRNA + S-adenosyl-L-methionine = N(7)-methylguanosine(46) in tRNA + S-adenosyl-L-homocysteine. Its pathway is tRNA modification; N(7)-methylguanine-tRNA biosynthesis. Its function is as follows. Catalyzes the formation of N(7)-methylguanine at position 46 (m7G46) in tRNA. The chain is tRNA (guanine-N(7)-)-methyltransferase from Pseudomonas paraeruginosa (strain DSM 24068 / PA7) (Pseudomonas aeruginosa (strain PA7)).